Here is a 295-residue protein sequence, read N- to C-terminus: Dipeptide transport system permease protein DppC (295 aa).

7 helical membrane passes run 27-47 (ALIG…APYI), 97-117 (VFAG…LGLI), 132-152 (LIDI…VSIL), 156-178 (LANA…TRAA), 202-222 (MFIV…TMGI), 226-246 (ILEL…TPEL), and 262-282 (WLVT…NLMG). Positions 93–282 (TRISVFAGFI…SLVLAFNLMG (190 aa)) constitute an ABC transmembrane type-1 domain.

The protein belongs to the binding-protein-dependent transport system permease family. OppBC subfamily.

The protein resides in the cell inner membrane. Its function is as follows. Part of the ABC transporter DppBCDF involved in dipeptide transport. Responsible for the translocation of the substrate across the membrane. This is Dipeptide transport system permease protein DppC (dppC) from Haemophilus influenzae (strain ATCC 51907 / DSM 11121 / KW20 / Rd).